The primary structure comprises 739 residues: Adenosylcobalamin-dependent ribonucleoside-triphosphate reductase (739 aa).

An intrachain disulfide couples cysteine 119 to cysteine 419. The tract at residues 147–158 (SMPFSFLFDELM) is effector region-1. Residues 168-313 (ARSNISQIPR…ICNLIGKAVV (146 aa)) are effector region-2. Catalysis depends on residues cysteine 408 and glutamate 410. Residues 565 to 626 (FHYGAYLIQR…NPNFASAGTV (62 aa)) form an adenosylcobalamin-binding-1 region. Residues 685–724 (LQQAPKEPIDKETYEKRSQEITGNVEEVFSQLNSDVKDLE) are adenosylcobalamin-binding-2.

Belongs to the class II ribonucleoside-triphosphate reductase family. As to quaternary structure, monomer. Adenosylcob(III)alamin is required as a cofactor.

The catalysed reaction is a 2'-deoxyribonucleoside 5'-triphosphate + [thioredoxin]-disulfide + H2O = a ribonucleoside 5'-triphosphate + [thioredoxin]-dithiol. Its activity is regulated as follows. Allosterically regulated by ATP and dNTP. This Lactobacillus leichmannii protein is Adenosylcobalamin-dependent ribonucleoside-triphosphate reductase (rtpR).